The sequence spans 144 residues: Large ribosomal subunit protein uL16 (144 aa).

The protein belongs to the universal ribosomal protein uL16 family. As to quaternary structure, part of the 50S ribosomal subunit.

In terms of biological role, binds 23S rRNA and is also seen to make contacts with the A and possibly P site tRNAs. The protein is Large ribosomal subunit protein uL16 of Bacillus subtilis (strain 168).